The primary structure comprises 225 residues: MFATTLQGFTLGLAMIIPIGAQNAFVLSRGIHRNHHLLTATLCCLCDLVLIGIGVFGGANLLAASPIGLALLTWGGVLFLGWFGIRSLRSAWRGQGAKLADSPQLMGVKSVLAMTLGVTLLNPHVYLDTLMLLGSFGSQFAEELRSAFAAVAMLASLVWFYSLAFGAVVLSPWLARSRQGYSKLLILLLVSPCWGWRCNWRAGLCWRHKAIFVPHLIKINPGFMR.

The next 5 helical transmembrane spans lie at 1-21, 37-57, 65-85, 116-136, and 150-170; these read MFAT…PIGA, LLTA…GVFG, SPIG…WFGI, LGVT…LGSF, and AVAM…AVVL.

This sequence belongs to the LysE/ArgO transporter (TC 2.A.75) family.

The protein resides in the cell membrane. The chain is Putative amino-acid transporter YggA from Aeromonas hydrophila.